Consider the following 435-residue polypeptide: Trigger factor (435 aa).

Residues 164–249 (GDFAKFDFEG…LHEIQGKKAG (86 aa)) form the PPIase FKBP-type domain.

This sequence belongs to the FKBP-type PPIase family. Tig subfamily.

It localises to the cytoplasm. The catalysed reaction is [protein]-peptidylproline (omega=180) = [protein]-peptidylproline (omega=0). Involved in protein export. Acts as a chaperone by maintaining the newly synthesized protein in an open conformation. Functions as a peptidyl-prolyl cis-trans isomerase. The chain is Trigger factor from Campylobacter fetus subsp. fetus (strain 82-40).